The primary structure comprises 436 residues: Enolase (436 aa).

Gln-167 lines the (2R)-2-phosphoglycerate pocket. The active-site Proton donor is Glu-209. Mg(2+) contacts are provided by Asp-246, Glu-291, and Asp-318. Lys-343, Arg-372, Ser-373, and Lys-394 together coordinate (2R)-2-phosphoglycerate. The Proton acceptor role is filled by Lys-343.

It belongs to the enolase family. As to quaternary structure, component of the RNA degradosome, a multiprotein complex involved in RNA processing and mRNA degradation. Requires Mg(2+) as cofactor.

It localises to the cytoplasm. The protein resides in the secreted. The protein localises to the cell surface. It carries out the reaction (2R)-2-phosphoglycerate = phosphoenolpyruvate + H2O. It participates in carbohydrate degradation; glycolysis; pyruvate from D-glyceraldehyde 3-phosphate: step 4/5. Catalyzes the reversible conversion of 2-phosphoglycerate (2-PG) into phosphoenolpyruvate (PEP). It is essential for the degradation of carbohydrates via glycolysis. The sequence is that of Enolase from Haemophilus influenzae (strain PittEE).